Consider the following 120-residue polypeptide: Large ribosomal subunit protein uL18 (120 aa).

The protein belongs to the universal ribosomal protein uL18 family. In terms of assembly, part of the 50S ribosomal subunit; part of the 5S rRNA/L5/L18/L25 subcomplex. Contacts the 5S and 23S rRNAs.

This is one of the proteins that bind and probably mediate the attachment of the 5S RNA into the large ribosomal subunit, where it forms part of the central protuberance. In Rhizobium rhizogenes (strain K84 / ATCC BAA-868) (Agrobacterium radiobacter), this protein is Large ribosomal subunit protein uL18.